A 527-amino-acid polypeptide reads, in one-letter code: Endogenous retrovirus group FC1 member 1 Env polyprotein (527 aa).

Residues 1–411 (MNSPCDRLQQ…EPRPQNKSKW (411 aa)) form a surface protein region. Positions 280–283 (CFLC) match the CXXC motif. Residues 412–432 (AIFLPLVLGISLASSLVASGL) form a fusion peptide region. Residues 412-527 (AIFLPLVLGI…LKKKKSSKRS (116 aa)) are transmembrane protein. The short motif at 477–493 (AQNRQALDLLMAEKGRT) is the CKS-17 element. Cysteines 494 and 501 form a disulfide. The CX6CC signature appears at 494–502 (CLFLQEECC).

This sequence belongs to the gamma type-C retroviral envelope protein family. HERV class-I F(c)2 env subfamily. The CXXC motif is highly conserved across a broad range of retroviral envelope proteins. It is thought to participate in the formation of a labile disulfide bond possibly with the CX6CC motif present in the transmembrane domain. As to expression, low expression in skin and testis.

It localises to the virion. In terms of biological role, retroviral envelope proteins mediate receptor recognition and membrane fusion during early infection. Endogenous envelope proteins may have kept, lost or modified their original function during evolution. This endogenous envelope protein has lost its original fusogenic properties. In Homo sapiens (Human), this protein is Endogenous retrovirus group FC1 member 1 Env polyprotein (ERVFC1-1).